We begin with the raw amino-acid sequence, 517 residues long: Nuclear receptor subfamily 5 group A member 2 (517 aa).

Positions 43–118 (DEMCPVCGDK…VGMKLEAVRA (76 aa)) form a DNA-binding region, nuclear receptor. Zn(2+) is bound by residues C46, C49, C63, C66, C82, C88, C98, and C101. NR C4-type zinc fingers lie at residues 46 to 66 (CPVC…CESC) and 82 to 101 (CIEN…CPYC). A C-terminal extension (CTE) region spans residues 112–127 (KLEAVRADRMRGGRNK). The FTZ-F1 box motif lies at 128–147 (FGPMYKRDRALKQQKKALIR). Residues 182 to 211 (GLPLSHHHHHHHHHHHHSSSSAGLPPADFD) are disordered. Positions 186-199 (SHHHHHHHHHHHHS) are enriched in basic residues. The NR LBD domain maps to 276-515 (SFPHLVVELL…NLLIEMLHAK (240 aa)). Residues 397 to 400 (GATL), Y492, and K496 each bind a phospholipid derivative. Positions 504-515 (CNNLLIEMLHAK) are AF-2.

Belongs to the nuclear hormone receptor family. NR5 subfamily. In terms of assembly, monomer; Binds DNA as a monomer.

The protein resides in the nucleus. The protein localises to the chromosome. In terms of biological role, orphan nuclear receptor that binds DNA as a monomer to the 5'-TCAAGGCCA-3' sequence and controls expression of target genes: regulates key biological processes, such as cholesterol and bile acid synthesis pathways, as well as cartilage, liver and pancreas morphogenesis. Ligand-binding causes conformational change which causes recruitment of coactivators, promoting target gene activation. The specific ligand is unknown, but specific phospholipids, such as phosphatidylethanolamine, phosphatidylserine, dilauroyl phosphatidylcholine and diundecanoyl phosphatidylcholine can act as ligand in vitro. Acts as a pioneer transcription factor, which unwraps target DNA from histones and elicits local opening of closed chromatin. Involved in the formation of connective tissue in lower jaw. Lacks transcription factor activity; unable to activate expression of target genes. This Danio rerio (Zebrafish) protein is Nuclear receptor subfamily 5 group A member 2.